Here is a 65-residue protein sequence, read N- to C-terminus: Large ribosomal subunit protein bL35 (65 aa).

The protein belongs to the bacterial ribosomal protein bL35 family.

The sequence is that of Large ribosomal subunit protein bL35 from Wolbachia sp. subsp. Brugia malayi (strain TRS).